The primary structure comprises 121 residues: MSNQVLLDKLDRTTETLSNTLIHLAKLSDIEFGGKDTEQPRSSSGLATVSSSGVQMSNNYTMQLIKGIQDLLVITRSIREKWVLSQLPENEELSMFESEETLENCRKLVQESMETLLNDMP.

It belongs to the Mediator complex subunit 22 family. In terms of assembly, component of the Mediator complex.

It localises to the nucleus. Component of the Mediator complex, a coactivator involved in the regulated transcription of nearly all RNA polymerase II-dependent genes. Mediator functions as a bridge to convey information from gene-specific regulatory proteins to the basal RNA polymerase II transcription machinery. Mediator is recruited to promoters by direct interactions with regulatory proteins and serves as a scaffold for the assembly of a functional preinitiation complex with RNA polymerase II and the general transcription factors. The polypeptide is Mediator of RNA polymerase II transcription subunit 22 (SRB6) (Kluyveromyces lactis (strain ATCC 8585 / CBS 2359 / DSM 70799 / NBRC 1267 / NRRL Y-1140 / WM37) (Yeast)).